The chain runs to 360 residues: MQNPKEKMDLSQSILSLIFIVSMGVISFLVIHPFILGFFWASMIVIATWPLMLKIQKILGGKRSLAVIIMIIILLLLFIIPVFFLVNSLIATSIPIIHWLGSNDLELPELAWLQNIPLMGRKIFNSYQTLLNSDGGELIHKIRPYMGHATEFFIIQVRNCGLFIVHSILMLFFSALLYWNGEKISISIHHFAYRLSEKNGKAILLLATQAVRAVALGVAVTALIQALLSGIGLLVSGVPYWALLMIIIFFSCLIQLGPLPILIPSIIWLYWNDDTTWGTILLIWSCFVFILDHILRPFFIRIGADLPILLTLSGVIGGLLTFGMIGLFIGPVVLVIFYRLTISWIYGISIASFLENTSLK.

Helical transmembrane passes span 18–38, 39–59, 66–86, 161–181, 204–224, 230–250, 251–271, 280–300, and 316–336; these read IFIV…ILGF, FWAS…QKIL, AVII…FFLV, GLFI…YWNG, LLLA…TALI, GIGL…IIFF, SCLI…WLYW, ILLI…PFFI, and IGGL…VLVI.

It belongs to the autoinducer-2 exporter (AI-2E) (TC 2.A.86) family.

The protein resides in the cell membrane. This Buchnera aphidicola subsp. Acyrthosiphon pisum (strain APS) (Acyrthosiphon pisum symbiotic bacterium) protein is Putative transport protein BU123.